The primary structure comprises 418 residues: Tektin-1 (418 aa).

4 coiled-coil regions span residues 20–107 (NKSQ…SYKE), 134–177 (QELQ…DLRD), 266–308 (NGLK…QQEG), and 332–383 (IAQY…ENTI).

This sequence belongs to the tektin family. Microtubule inner protein component of sperm flagellar doublet microtubules. Ubiquitinated, leading to its degradation. Deubiquitinated by USP16, promoting its stability.

It localises to the cytoplasm. The protein resides in the cytoskeleton. The protein localises to the cilium axoneme. It is found in the flagellum axoneme. Its function is as follows. Microtubule inner protein (MIP) part of the dynein-decorated doublet microtubules (DMTs) in cilia and flagellar axoneme. Forms filamentous polymers in the walls of ciliary and flagellar microtubules. In Mus musculus (Mouse), this protein is Tektin-1 (Tekt1).